A 368-amino-acid polypeptide reads, in one-letter code: Histidinol-phosphate aminotransferase (368 aa).

K223 is modified (N6-(pyridoxal phosphate)lysine).

Belongs to the class-II pyridoxal-phosphate-dependent aminotransferase family. Histidinol-phosphate aminotransferase subfamily. As to quaternary structure, homodimer. Pyridoxal 5'-phosphate serves as cofactor.

The catalysed reaction is L-histidinol phosphate + 2-oxoglutarate = 3-(imidazol-4-yl)-2-oxopropyl phosphate + L-glutamate. It functions in the pathway amino-acid biosynthesis; L-histidine biosynthesis; L-histidine from 5-phospho-alpha-D-ribose 1-diphosphate: step 7/9. This Rhodospirillum rubrum (strain ATCC 11170 / ATH 1.1.1 / DSM 467 / LMG 4362 / NCIMB 8255 / S1) protein is Histidinol-phosphate aminotransferase.